A 426-amino-acid polypeptide reads, in one-letter code: Serine/threonine-protein kinase ssn3 (426 aa).

One can recognise a Protein kinase domain in the interval 41–368 (YHIVGFISSG…AREALEHPYF (328 aa)). ATP is bound by residues 47-55 (ISSGTYGRV) and Lys-71. Catalysis depends on Asp-173, which acts as the Proton acceptor. Residues 390–426 (RVTQDDNDIRSGSLPGTKRSGLPDDSLMGRAAKRLKE) form a disordered region.

It belongs to the protein kinase superfamily. CMGC Ser/Thr protein kinase family. CDC2/CDKX subfamily. As to quaternary structure, component of the srb8-11 complex, a regulatory module of the Mediator complex. Mg(2+) serves as cofactor.

The protein localises to the nucleus. The enzyme catalyses L-seryl-[protein] + ATP = O-phospho-L-seryl-[protein] + ADP + H(+). It catalyses the reaction L-threonyl-[protein] + ATP = O-phospho-L-threonyl-[protein] + ADP + H(+). The catalysed reaction is [DNA-directed RNA polymerase] + ATP = phospho-[DNA-directed RNA polymerase] + ADP + H(+). In terms of biological role, component of the srb8-11 complex. The srb8-11 complex is a regulatory module of the Mediator complex which is itself involved in regulation of basal and activated RNA polymerase II-dependent transcription. The srb8-11 complex may be involved in the transcriptional repression of a subset of genes regulated by Mediator. It may inhibit the association of the Mediator complex with RNA polymerase II to form the holoenzyme complex. The srb8-11 complex phosphorylates the C-terminal domain (CTD) of the largest subunit of RNA polymerase II. The polypeptide is Serine/threonine-protein kinase ssn3 (ssn3) (Aspergillus fumigatus (strain ATCC MYA-4609 / CBS 101355 / FGSC A1100 / Af293) (Neosartorya fumigata)).